A 1465-amino-acid chain; its full sequence is DNA polymerase III PolC-type (1465 aa).

Positions 427–583 constitute an Exonuclease domain; sequence YVVFDVETTG…YDAEATGRLL (157 aa).

Belongs to the DNA polymerase type-C family. PolC subfamily.

Its subcellular location is the cytoplasm. The catalysed reaction is DNA(n) + a 2'-deoxyribonucleoside 5'-triphosphate = DNA(n+1) + diphosphate. In terms of biological role, required for replicative DNA synthesis. This DNA polymerase also exhibits 3' to 5' exonuclease activity. The protein is DNA polymerase III PolC-type of Streptococcus pyogenes serotype M4 (strain MGAS10750).